We begin with the raw amino-acid sequence, 419 residues long: MKHQRVIVLGAGVTGKSVAEFLHSRGSYVIGIDGSLDALNSCSFFHERYLDTIEEFPEDMDLFVRSPGVKPSHSLVVEAKRRGIPIVTDVQLAFQDPEFHRYPSIGITGSAGKTTTVLFLVHLLRSMGMGAFAMGNIGVPILQAMREKGIRVVEISSFQLTEQEIETPVLSGAAILNISENHLDYHQSLQNYSEAKRNITKCLQSVESLWVGEWLSPGKSYLDYTKEIASVLDKGSALKPLYLHDRSNYCAAYALANEISNVPLEAFLQALQTFEKPPHRIEYLGEKDGVSYINDSKATTMSSVEKALIAVKENVIVILGGRNKGSDFTSLIPILTQTVKHIVAMGECRNEIAQALSGSLPLTQARDLQEAVSMAQSIAQPGDVILLSPGCASFDQFRSFEERGDCFRQLVGDMEALRV.

Residue 109–115 coordinates ATP; that stretch reads GSAGKTT.

It belongs to the MurCDEF family.

Its subcellular location is the cytoplasm. It carries out the reaction UDP-N-acetyl-alpha-D-muramoyl-L-alanine + D-glutamate + ATP = UDP-N-acetyl-alpha-D-muramoyl-L-alanyl-D-glutamate + ADP + phosphate + H(+). It participates in cell wall biogenesis; peptidoglycan biosynthesis. Its function is as follows. Cell wall formation. Catalyzes the addition of glutamate to the nucleotide precursor UDP-N-acetylmuramoyl-L-alanine (UMA). The polypeptide is UDP-N-acetylmuramoylalanine--D-glutamate ligase (Chlamydia caviae (strain ATCC VR-813 / DSM 19441 / 03DC25 / GPIC) (Chlamydophila caviae)).